The primary structure comprises 130 residues: Ribonuclease VapC22 (130 aa).

The region spanning 4–119 (VLLDSHVAYW…RLVTKDRRLR (116 aa)) is the PINc domain. Residues aspartate 7 and aspartate 97 each coordinate Mg(2+).

Belongs to the PINc/VapC protein family. It depends on Mg(2+) as a cofactor.

The protein localises to the secreted. In terms of biological role, toxic component of a type II toxin-antitoxin (TA) system. An RNase. Upon expression in M.smegmatis inhibits translation and colony formation. Its toxic effect on colony formation is neutralized by coexpression with cognate antitoxin VapB22; the effect on translation has not been tested but is probably neutralized also. In Mycobacterium tuberculosis (strain ATCC 25618 / H37Rv), this protein is Ribonuclease VapC22.